Consider the following 470-residue polypeptide: Ribulose bisphosphate carboxylase large chain (470 aa).

Positions 115 and 165 each coordinate substrate. Lys167 (proton acceptor) is an active-site residue. A substrate-binding site is contributed by Lys169. Lys193, Asp195, and Glu196 together coordinate Mg(2+). Lys193 bears the N6-carboxylysine mark. His286 (proton acceptor) is an active-site residue. Substrate-binding residues include Arg287, His319, and Ser371.

It belongs to the RuBisCO large chain family. Type I subfamily. Heterohexadecamer of 8 large chains and 8 small chains. Mg(2+) serves as cofactor.

It localises to the carboxysome. It carries out the reaction 2 (2R)-3-phosphoglycerate + 2 H(+) = D-ribulose 1,5-bisphosphate + CO2 + H2O. The enzyme catalyses D-ribulose 1,5-bisphosphate + O2 = 2-phosphoglycolate + (2R)-3-phosphoglycerate + 2 H(+). Its function is as follows. RuBisCO catalyzes two reactions: the carboxylation of D-ribulose 1,5-bisphosphate, the primary event in carbon dioxide fixation, as well as the oxidative fragmentation of the pentose substrate in the photorespiration process. Both reactions occur simultaneously and in competition at the same active site. The chain is Ribulose bisphosphate carboxylase large chain from Synechococcus sp. (strain CC9311).